Reading from the N-terminus, the 461-residue chain is Phosphoenolpyruvate carboxylase (461 aa).

This sequence belongs to the PEPCase type 2 family. In terms of assembly, homotetramer. The cofactor is Mg(2+).

The catalysed reaction is oxaloacetate + phosphate = phosphoenolpyruvate + hydrogencarbonate. Catalyzes the irreversible beta-carboxylation of phosphoenolpyruvate (PEP) to form oxaloacetate (OAA), a four-carbon dicarboxylic acid source for the tricarboxylic acid cycle. This Pyrobaculum islandicum (strain DSM 4184 / JCM 9189 / GEO3) protein is Phosphoenolpyruvate carboxylase.